Consider the following 198-residue polypeptide: MAKILVLYYSMYGHIETMAHAVAEGAKKVDGAEVIIKRVPETMPPEIFAKAGGKTQNAPVATPQELADYDAIIFGTPTRFGNMSGQMRTFLDQTGGLWASGALYGKLGSVFSSTGTGGGQEQTITSTWTTLAHHGMVIVPIGYAAQELFDVSHVRGGTPYGATTIAGGDGSRQPSQEELSIARYQGEYVAGLAVKLNG.

A Flavodoxin-like domain is found at 4–189 (ILVLYYSMYG…SIARYQGEYV (186 aa)). FMN-binding positions include 10–15 (SMYGHI) and 78–80 (TRF). Tyr-12 contributes to the NAD(+) binding site. Trp-98 lines the substrate pocket. FMN-binding positions include 113 to 118 (STGTGG) and His-133.

It belongs to the WrbA family. FMN is required as a cofactor.

It carries out the reaction a quinone + NADH + H(+) = a quinol + NAD(+). It catalyses the reaction a quinone + NADPH + H(+) = a quinol + NADP(+). The polypeptide is NAD(P)H dehydrogenase (quinone) (Salmonella paratyphi B (strain ATCC BAA-1250 / SPB7)).